A 185-amino-acid polypeptide reads, in one-letter code: Probable host range protein 2 (185 aa).

This sequence belongs to the poxviridae C7 protein family.

In terms of biological role, plays a role for multiplication of the virus in different cell types. The protein is Probable host range protein 2 of Swinepox virus (strain Kasza) (SWPV).